Here is a 297-residue protein sequence, read N- to C-terminus: CASP-like protein 4A2 (297 aa).

The span at 1-20 (MKMKRTASSNSEAQSYNESP) shows a compositional bias: polar residues. Residues 1–135 (MKMKRTASSN…PINGEESTRT (135 aa)) form a disordered region. Topologically, residues 1–149 (MKMKRTASSN…ARGDDLVSLT (149 aa)) are cytoplasmic. The span at 69–83 (LPSPIPPPPPQFPPP) shows a compositional bias: pro residues. The helical transmembrane segment at 150-170 (ALGFRITEVILCVISFSIMAA) threads the bilayer. Topologically, residues 171-191 (DKTQGWSGDSYDRYKEYRYCL) are extracellular. A helical membrane pass occupies residues 192–212 (AVNVIAFVYSAFEACDAACYI). At 213-225 (AKESYMINCGFHD) the chain is on the cytoplasmic side. A helical transmembrane segment spans residues 226–246 (LFVFSMDQLLAYLLMSASSCA). The Extracellular segment spans residues 247 to 265 (ATRVDDWVSNWGKDEFTQM). Residues 266–286 (ATASIAVSFLAFGAFAVSALI) form a helical membrane-spanning segment. The Cytoplasmic portion of the chain corresponds to 287–297 (SSYRLFTHASS).

It belongs to the Casparian strip membrane proteins (CASP) family. As to quaternary structure, homodimer and heterodimers.

It localises to the cell membrane. The chain is CASP-like protein 4A2 from Arabidopsis thaliana (Mouse-ear cress).